Consider the following 208-residue polypeptide: Thymidylate kinase (208 aa).

10-17 (GIDGSGKS) lines the ATP pocket.

The protein belongs to the thymidylate kinase family.

It carries out the reaction dTMP + ATP = dTDP + ADP. Phosphorylation of dTMP to form dTDP in both de novo and salvage pathways of dTTP synthesis. The chain is Thymidylate kinase from Jannaschia sp. (strain CCS1).